The primary structure comprises 247 residues: Histone acetyltransferase MCC1 (247 aa).

The N-acetyltransferase domain maps to 25-198 (IHYRPINPND…DAFLFVYFIN (174 aa)).

It belongs to the acetyltransferase family.

It catalyses the reaction L-lysyl-[protein] + acetyl-CoA = N(6)-acetyl-L-lysyl-[protein] + CoA + H(+). In terms of biological role, histone acetyltransferase that probably regulates acetylation status of histone H3 during meiosis. Histone acetylation may influence recombination and chromosome segregation. This is Histone acetyltransferase MCC1 (MCC1) from Arabidopsis thaliana (Mouse-ear cress).